We begin with the raw amino-acid sequence, 256 residues long: 5'-nucleotidase SurE (256 aa).

Residues aspartate 8, aspartate 9, serine 42, and asparagine 94 each contribute to the a divalent metal cation site.

This sequence belongs to the SurE nucleotidase family. Requires a divalent metal cation as cofactor.

It localises to the cytoplasm. It carries out the reaction a ribonucleoside 5'-phosphate + H2O = a ribonucleoside + phosphate. Functionally, nucleotidase that shows phosphatase activity on nucleoside 5'-monophosphates. This chain is 5'-nucleotidase SurE, found in Ehrlichia chaffeensis (strain ATCC CRL-10679 / Arkansas).